A 273-amino-acid polypeptide reads, in one-letter code: 2,3,4,5-tetrahydropyridine-2,6-dicarboxylate N-succinyltransferase (273 aa).

Substrate-binding residues include Arg104 and Asp141.

It belongs to the transferase hexapeptide repeat family. As to quaternary structure, homotrimer.

The protein resides in the cytoplasm. The enzyme catalyses (S)-2,3,4,5-tetrahydrodipicolinate + succinyl-CoA + H2O = (S)-2-succinylamino-6-oxoheptanedioate + CoA. It functions in the pathway amino-acid biosynthesis; L-lysine biosynthesis via DAP pathway; LL-2,6-diaminopimelate from (S)-tetrahydrodipicolinate (succinylase route): step 1/3. The chain is 2,3,4,5-tetrahydropyridine-2,6-dicarboxylate N-succinyltransferase from Buchnera aphidicola subsp. Schizaphis graminum (strain Sg).